The sequence spans 221 residues: Large ribosomal subunit protein uL3 (221 aa).

Residues 131–165 form a disordered region; it reads HNQSRGPETHGSRHHRRPGSMGPIKGKIKGKKLPG.

Belongs to the universal ribosomal protein uL3 family. In terms of assembly, part of the 50S ribosomal subunit. Forms a cluster with proteins L14 and L19.

Its function is as follows. One of the primary rRNA binding proteins, it binds directly near the 3'-end of the 23S rRNA, where it nucleates assembly of the 50S subunit. This Phytoplasma australiense protein is Large ribosomal subunit protein uL3.